The following is a 322-amino-acid chain: Cytochrome c biogenesis protein CcsA (322 aa).

Helical transmembrane passes span 9-29 (ILTH…LITL), 44-64 (GMIV…VSSG), 68-88 (LSNL…LHTI), 143-163 (MLLS…ILII), 226-246 (IISL…VWAN), 260-274 (TWAF…IYLH), and 289-309 (IASI…LLGI).

It belongs to the CcmF/CycK/Ccl1/NrfE/CcsA family. As to quaternary structure, may interact with Ccs1.

It is found in the plastid. It localises to the chloroplast thylakoid membrane. In terms of biological role, required during biogenesis of c-type cytochromes (cytochrome c6 and cytochrome f) at the step of heme attachment. This is Cytochrome c biogenesis protein CcsA from Hordeum vulgare (Barley).